A 401-amino-acid polypeptide reads, in one-letter code: E3 ubiquitin-protein ligase DA2 (401 aa).

The RING-type; degenerate zinc-finger motif lies at C59 to K102. Basic and acidic residues predominate over residues K139–E153. A disordered region spans residues K139–G164.

As to quaternary structure, interacts with DA1 (via C-terminus).

It catalyses the reaction S-ubiquitinyl-[E2 ubiquitin-conjugating enzyme]-L-cysteine + [acceptor protein]-L-lysine = [E2 ubiquitin-conjugating enzyme]-L-cysteine + N(6)-ubiquitinyl-[acceptor protein]-L-lysine.. It participates in protein modification; protein ubiquitination. Functionally, E3 ubiquitin-protein ligase involved in the regulation of organ and seed size. Acts synergistically with DA1 to regulate seed size. Functions synergistically with DA1 to restrict cell proliferation in the maternal integuments of ovules and developing seeds. Seems to function independently of BB. Possesses E3 ubiquitin-protein ligase activity in vitro. Polyubiquitinates DA1, DAR1 and DAR2, but not DAR3. This is E3 ubiquitin-protein ligase DA2 from Arabidopsis thaliana (Mouse-ear cress).